The sequence spans 955 residues: Glycine dehydrogenase (decarboxylating) (955 aa).

N6-(pyridoxal phosphate)lysine is present on Lys-702.

This sequence belongs to the GcvP family. In terms of assembly, the glycine cleavage system is composed of four proteins: P, T, L and H. Requires pyridoxal 5'-phosphate as cofactor.

The catalysed reaction is N(6)-[(R)-lipoyl]-L-lysyl-[glycine-cleavage complex H protein] + glycine + H(+) = N(6)-[(R)-S(8)-aminomethyldihydrolipoyl]-L-lysyl-[glycine-cleavage complex H protein] + CO2. In terms of biological role, the glycine cleavage system catalyzes the degradation of glycine. The P protein binds the alpha-amino group of glycine through its pyridoxal phosphate cofactor; CO(2) is released and the remaining methylamine moiety is then transferred to the lipoamide cofactor of the H protein. The protein is Glycine dehydrogenase (decarboxylating) of Bradyrhizobium diazoefficiens (strain JCM 10833 / BCRC 13528 / IAM 13628 / NBRC 14792 / USDA 110).